Reading from the N-terminus, the 211-residue chain is MRLTAKQVTWLKVCLHLAGLLPFLWLVWAINHGGLGADPVKDIQHFTGRTALKFLLATLLITPLARYAKQPLLIRTRRLLGLWCFAWATLHLTSYALLELGVNNLALLGKELITRPYLTLGIISWIILLALAFTSTQAMQRKLGKHWQQLHNFVYLVAILAPIHYLWSVKIISPQPLIYAGLAVLLLALRYKKSRSLFNRLRKQVHNKLSV.

The next 4 membrane-spanning stretches (helical) occupy residues 10 to 30 (WLKVCLHLAGLLPFLWLVWAI), 82 to 102 (LWCFAWATLHLTSYALLELGV), 116 to 136 (PYLTLGIISWIILLALAFTST), and 153 to 173 (FVYLVAILAPIHYLWSVKIIS).

It belongs to the MsrQ family. Heterodimer of a catalytic subunit (MsrP) and a heme-binding subunit (MsrQ). It depends on FMN as a cofactor. The cofactor is heme b.

Its subcellular location is the cell inner membrane. Its function is as follows. Part of the MsrPQ system that repairs oxidized periplasmic proteins containing methionine sulfoxide residues (Met-O), using respiratory chain electrons. Thus protects these proteins from oxidative-stress damage caused by reactive species of oxygen and chlorine generated by the host defense mechanisms. MsrPQ is essential for the maintenance of envelope integrity under bleach stress, rescuing a wide series of structurally unrelated periplasmic proteins from methionine oxidation, including the primary periplasmic chaperone SurA and the lipoprotein Pal. MsrQ provides electrons for reduction to the reductase catalytic subunit MsrP, using the quinone pool of the respiratory chain. This Escherichia coli O157:H7 protein is Protein-methionine-sulfoxide reductase heme-binding subunit MsrQ.